The primary structure comprises 314 residues: Homoserine O-succinyltransferase (314 aa).

The active-site Acyl-thioester intermediate is the Cys-142. Substrate is bound by residues Lys-163 and Ser-192. His-235 serves as the catalytic Proton acceptor. Glu-237 is a catalytic residue. A substrate-binding site is contributed by Arg-249.

Belongs to the MetA family.

It localises to the cytoplasm. It catalyses the reaction L-homoserine + succinyl-CoA = O-succinyl-L-homoserine + CoA. It participates in amino-acid biosynthesis; L-methionine biosynthesis via de novo pathway; O-succinyl-L-homoserine from L-homoserine: step 1/1. Its function is as follows. Transfers a succinyl group from succinyl-CoA to L-homoserine, forming succinyl-L-homoserine. The polypeptide is Homoserine O-succinyltransferase (Shewanella pealeana (strain ATCC 700345 / ANG-SQ1)).